A 51-amino-acid chain; its full sequence is Insulin (51 aa).

Disulfide bonds link Cys7-Cys37, Cys19-Cys50, and Cys36-Cys41.

It belongs to the insulin family. In terms of assembly, heterodimer of a B chain and an A chain linked by two disulfide bonds.

Its subcellular location is the secreted. Functionally, insulin decreases blood glucose concentration. It increases cell permeability to monosaccharides, amino acids and fatty acids. It accelerates glycolysis, the pentose phosphate cycle, and glycogen synthesis in liver. This chain is Insulin (INS), found in Saimiri sciureus (Common squirrel monkey).